Consider the following 589-residue polypeptide: Type I restriction enzyme EcoAI specificity subunit (589 aa).

Belongs to the type-I restriction system S methylase family. As to quaternary structure, the type I restriction/modification system is composed of three polypeptides R, M and S. The restriction enzyme has stoichiometry R(2)M(2)S(1) while the methyltransferase is M(2)S(1).

In terms of biological role, the specificity (S) subunit of a type I restriction enzyme; this subunit dictates DNA sequence specificity. The M and S subunits together form a methyltransferase (MTase) that methylates A-2 on the top strand and A-3 on the bottom strand of the sequence 5'-GAGN(7)GTCA-3'. In the presence of the R subunit the complex can also act as an endonuclease, binding to the same target sequence but cutting the DNA some distance from this site. Whether the DNA is cut or modified depends on the methylation state of the target sequence. When the target site is unmodified, the DNA is cut. When the target site is hemimethylated, the complex acts as a maintenance MTase modifying the DNA so that both strands become methylated. After locating a non-methylated recognition site, the enzyme complex serves as a molecular motor that translocates DNA in an ATP-dependent manner until a collision occurs that triggers cleavage. This is Type I restriction enzyme EcoAI specificity subunit from Escherichia coli.